The following is a 276-amino-acid chain: Undecaprenyl-diphosphatase (276 aa).

8 helical membrane-spanning segments follow: residues 1 to 21 (MELY…FLPV), 40 to 60 (ALSF…LVFF), 93 to 113 (VRLA…GLIL), 120 to 140 (LFSS…FLWL), 154 to 174 (IGFG…IPGI), 199 to 219 (FLLS…ESFA), 227 to 247 (VTLL…VALL), and 255 to 275 (FYLF…AGFV).

The protein belongs to the UppP family.

Its subcellular location is the cell inner membrane. It catalyses the reaction di-trans,octa-cis-undecaprenyl diphosphate + H2O = di-trans,octa-cis-undecaprenyl phosphate + phosphate + H(+). Catalyzes the dephosphorylation of undecaprenyl diphosphate (UPP). Confers resistance to bacitracin. The chain is Undecaprenyl-diphosphatase from Desulforapulum autotrophicum (strain ATCC 43914 / DSM 3382 / VKM B-1955 / HRM2) (Desulfobacterium autotrophicum).